The following is a 343-amino-acid chain: Uroporphyrinogen decarboxylase (343 aa).

Substrate-binding positions include 23-27 (RQAGR), Phe-42, Asp-73, Tyr-150, Ser-205, and His-322.

The protein belongs to the uroporphyrinogen decarboxylase family. Homodimer.

It is found in the cytoplasm. The enzyme catalyses uroporphyrinogen III + 4 H(+) = coproporphyrinogen III + 4 CO2. The protein operates within porphyrin-containing compound metabolism; protoporphyrin-IX biosynthesis; coproporphyrinogen-III from 5-aminolevulinate: step 4/4. With respect to regulation, inhibited by N-ethyl-maleimide and phenylglyoxal. Catalyzes the decarboxylation of four acetate groups of uroporphyrinogen-III to yield coproporphyrinogen-III. The sequence is that of Uroporphyrinogen decarboxylase (hemE) from Cereibacter sphaeroides (strain ATCC 17023 / DSM 158 / JCM 6121 / CCUG 31486 / LMG 2827 / NBRC 12203 / NCIMB 8253 / ATH 2.4.1.) (Rhodobacter sphaeroides).